The following is a 428-amino-acid chain: MFVDQVQVEVQAGKGGDGMVAFRREKFVPFGGPAGGDGGHGGSIILYVDEGLRTLMDFRYQRHFKASAGGNGQGKQMYGRAAEDRRIAVPAGTTVTDADTGEVLGDLTEPGQTLVVAKGGRGGRGNMHFVSPKNTAPEISENGEPGEHRFIKLELKVLADVGLVGFPSVGKSTLLSVVTQAKPKIAAYQFTTLVPNLGMVQLDDGTDFVMADLPGLIEGASQGVGLGIQFLRHVERTRVLLHLVEMDPDNGREPLDDYDQIRKELGAYDDNILKRPELVVATKMDLPGAAERFADFKAALLARGVAADHIFEISSLTHRGVTPLMHKTAEVLKTAPHFEPKQAAVKTADYKYQPEPALKVTRDSDGTFVLTGDKIERAFKMANLDHEDGAMRFARQLRSMGVDDALRDAGAESGDLVAIDDFTFEFVE.

Residues 1 to 158 (MFVDQVQVEV…RFIKLELKVL (158 aa)) enclose the Obg domain. The OBG-type G domain maps to 159 to 333 (ADVGLVGFPS…LMHKTAEVLK (175 aa)). GTP-binding positions include 165-172 (GFPSVGKS), 190-194 (FTTLV), 212-215 (DLPG), 282-285 (TKMD), and 314-316 (SSL). The Mg(2+) site is built by serine 172 and threonine 192. Positions 350-428 (YKYQPEPALK…IDDFTFEFVE (79 aa)) constitute an OCT domain.

This sequence belongs to the TRAFAC class OBG-HflX-like GTPase superfamily. OBG GTPase family. In terms of assembly, monomer. Requires Mg(2+) as cofactor.

The protein localises to the cytoplasm. Its function is as follows. An essential GTPase which binds GTP, GDP and possibly (p)ppGpp with moderate affinity, with high nucleotide exchange rates and a fairly low GTP hydrolysis rate. Plays a role in control of the cell cycle, stress response, ribosome biogenesis and in those bacteria that undergo differentiation, in morphogenesis control. This chain is GTPase Obg, found in Lacticaseibacillus paracasei (strain ATCC 334 / BCRC 17002 / CCUG 31169 / CIP 107868 / KCTC 3260 / NRRL B-441) (Lactobacillus paracasei).